The following is a 149-amino-acid chain: Deoxyuridine 5'-triphosphate nucleotidohydrolase (149 aa).

Substrate is bound by residues 68-70, asparagine 81, 85-87, and methionine 95; these read RSG and LID.

The protein belongs to the dUTPase family. Requires Mg(2+) as cofactor.

The enzyme catalyses dUTP + H2O = dUMP + diphosphate + H(+). Its pathway is pyrimidine metabolism; dUMP biosynthesis; dUMP from dCTP (dUTP route): step 2/2. In terms of biological role, this enzyme is involved in nucleotide metabolism: it produces dUMP, the immediate precursor of thymidine nucleotides and it decreases the intracellular concentration of dUTP so that uracil cannot be incorporated into DNA. This Janthinobacterium sp. (strain Marseille) (Minibacterium massiliensis) protein is Deoxyuridine 5'-triphosphate nucleotidohydrolase.